The following is a 129-amino-acid chain: Small ribosomal subunit protein uS11 (129 aa).

This sequence belongs to the universal ribosomal protein uS11 family. Part of the 30S ribosomal subunit.

Its function is as follows. Located on the platform of the 30S subunit. This is Small ribosomal subunit protein uS11 from Methanocaldococcus jannaschii (strain ATCC 43067 / DSM 2661 / JAL-1 / JCM 10045 / NBRC 100440) (Methanococcus jannaschii).